The chain runs to 166 residues: Putative peptidyl-prolyl cis-trans isomerase dodo (166 aa).

The WW domain occupies 5-39; sequence EQLPDGWEKRTSRSTGMSYYLNMYTKESQWDQPTE. The disordered stretch occupies residues 32–53; the sequence is SQWDQPTEPAKKAGGGSAGGGD. Over residues 44–53 the composition is skewed to gly residues; it reads AGGGSAGGGD. The PpiC domain maps to 55 to 166; that stretch reads PDEVHCLHLL…SGLHIILRKA (112 aa).

It catalyses the reaction [protein]-peptidylproline (omega=180) = [protein]-peptidylproline (omega=0). This Drosophila melanogaster (Fruit fly) protein is Putative peptidyl-prolyl cis-trans isomerase dodo (dod).